Reading from the N-terminus, the 185-residue chain is Peptidyl-tRNA hydrolase (185 aa).

Phe-12 lines the tRNA pocket. His-17 functions as the Proton acceptor in the catalytic mechanism. TRNA is bound by residues Tyr-61, Asn-63, and Asn-109.

The protein belongs to the PTH family. In terms of assembly, monomer.

The protein localises to the cytoplasm. It catalyses the reaction an N-acyl-L-alpha-aminoacyl-tRNA + H2O = an N-acyl-L-amino acid + a tRNA + H(+). Hydrolyzes ribosome-free peptidyl-tRNAs (with 1 or more amino acids incorporated), which drop off the ribosome during protein synthesis, or as a result of ribosome stalling. Functionally, catalyzes the release of premature peptidyl moieties from peptidyl-tRNA molecules trapped in stalled 50S ribosomal subunits, and thus maintains levels of free tRNAs and 50S ribosomes. This is Peptidyl-tRNA hydrolase from Borrelia garinii subsp. bavariensis (strain ATCC BAA-2496 / DSM 23469 / PBi) (Borreliella bavariensis).